We begin with the raw amino-acid sequence, 120 residues long: UPF0102 protein Caur_2698 (120 aa).

It belongs to the UPF0102 family.

The protein is UPF0102 protein Caur_2698 of Chloroflexus aurantiacus (strain ATCC 29366 / DSM 635 / J-10-fl).